The primary structure comprises 662 residues: MKDPAVEIEKLREQLHHHEHLYYVLDKPEITDAEYDALMHRLQELETKHPDLLTPDSPTQRVGGKPREGFIKVRHSSPMLSLDNALNEAELRDFDRRVRDLLGGAAFRYVTELKMDGLSMAAHYNNGKFTEAVTRGDGTTGEDVTENARTIRSLPLRVKTKLPAFEVRGETVMSRRAFERLNTDRDEKGLSRFANPRNAAAGSLRQLEPQVTASRRLEYYTYFLLTEGRPAYESHWEALTALKQMGFKVNDKSRPCDSIDEVLAFCAHWEGERENLPYEIDGVVVKVDSVEQQRRLGFTAKAPRWAIAYKYPARQATTMIEGIDVQVGRTGALTPVANLKPVVVGGVTVSRATLHNEDEIERLGLQIGDEVVVERSGDVIPKVVRVSSQGSYRKPFKMPSHCPVCNTKIVREEGEAASRCINANCPARLKESILHFASRGVMNIDGMGDALVDQLVDREIVHNIADLYDLKIEDLMDLDRMGVKSAGNVIRNIDKSRRNSLPRVLTALGIRFVGERTAVFLAQAFGSMDAIERATVDELQQAEEVGPKVAEAVVQFFSIPDNRELVDRLRKADLQFTYAYSRPKGGPLTGSTFVLTGTLPNLSREEAKQLIEQAGGKVASAVSKKTSYVVAGEDAGSKLDKAHQLNIRVITEAELHAMLRGE.

NAD(+)-binding positions include 32 to 36 (DAEYD), 81 to 82 (SL), and glutamate 112. The N6-AMP-lysine intermediate role is filled by lysine 114. Residues arginine 135, glutamate 170, lysine 286, and lysine 310 each coordinate NAD(+). Zn(2+) contacts are provided by cysteine 402, cysteine 405, cysteine 420, and cysteine 425. In terms of domain architecture, BRCT spans 583–662 (PKGGPLTGST…AELHAMLRGE (80 aa)).

The protein belongs to the NAD-dependent DNA ligase family. LigA subfamily. It depends on Mg(2+) as a cofactor. Mn(2+) serves as cofactor.

It carries out the reaction NAD(+) + (deoxyribonucleotide)n-3'-hydroxyl + 5'-phospho-(deoxyribonucleotide)m = (deoxyribonucleotide)n+m + AMP + beta-nicotinamide D-nucleotide.. DNA ligase that catalyzes the formation of phosphodiester linkages between 5'-phosphoryl and 3'-hydroxyl groups in double-stranded DNA using NAD as a coenzyme and as the energy source for the reaction. It is essential for DNA replication and repair of damaged DNA. The protein is DNA ligase of Solibacter usitatus (strain Ellin6076).